Reading from the N-terminus, the 507-residue chain is Probable DNA ligase (507 aa).

E209 is an ATP binding site. K211 functions as the N6-AMP-lysine intermediate in the catalytic mechanism. 6 residues coordinate ATP: R216, R231, E260, F300, R372, and K378.

The protein belongs to the ATP-dependent DNA ligase family. Requires Mg(2+) as cofactor.

The catalysed reaction is ATP + (deoxyribonucleotide)n-3'-hydroxyl + 5'-phospho-(deoxyribonucleotide)m = (deoxyribonucleotide)n+m + AMP + diphosphate.. Functionally, DNA ligase that seals nicks in double-stranded DNA during DNA replication, DNA recombination and DNA repair. This chain is Probable DNA ligase, found in Mycobacterium bovis (strain ATCC BAA-935 / AF2122/97).